Consider the following 69-residue polypeptide: Small, acid-soluble spore protein C4 (69 aa).

It belongs to the alpha/beta-type SASP family.

Its function is as follows. SASP are bound to spore DNA. They are double-stranded DNA-binding proteins that cause DNA to change to an a-like conformation. They protect the DNA backbone from chemical and enzymatic cleavage and are thus involved in dormant spore's high resistance to UV light. The chain is Small, acid-soluble spore protein C4 (SASP-C4) from Priestia megaterium (Bacillus megaterium).